The primary structure comprises 2230 residues: Probable serine/threonine-protein kinase DDB_G0267686 (2230 aa).

A compositionally biased stretch (low complexity) spans 1-12 (MEPNNNISNSNN). Disordered regions lie at residues 1–22 (MEPN…GDGK), 121–152 (NNNS…QLNN), 270–352 (DEKE…DKIS), 368–397 (PIIN…RLSS), 430–451 (NGAS…ILST), 464–574 (KNSS…NSPS), 593–620 (GSGS…NSST), 699–849 (QHQQ…LLPS), and 915–974 (SNQI…SSNS). The segment covering 270–336 (DEKENKEGGQ…NENEKNHNDK (67 aa)) has biased composition (basic and acidic residues). Residues 337–346 (NDDDDDDEDN) are compositionally biased toward acidic residues. 6 stretches are compositionally biased toward low complexity: residues 375–388 (SSSN…NNSI), 430–447 (NGAS…GPTP), 473–574 (NNNN…NSPS), 593–602 (GSGSSSLGKG), 610–619 (SYSNNNNNSS), and 699–721 (QHQQ…QQQL). Over residues 722-731 (KSRSNTTNTP) the composition is skewed to polar residues. The segment covering 745–754 (NSPPVSPPSS) has biased composition (pro residues). Composition is skewed to low complexity over residues 755 to 766 (PMLSPLSSSPPS) and 783 to 818 (TGSL…RSNS). Positions 840–849 (YNTTPPLLPS) are enriched in polar residues. The RGS domain occupies 991 to 1119 (SLSALMKDRI…CILHSTTNGT (129 aa)). Disordered stretches follow at residues 1146 to 1181 (SKET…INNN), 1220 to 1243 (KLSH…NQPL), 1300 to 1362 (LSPP…GDQT), 1506 to 1546 (QQQQ…QPQQ), 1563 to 1611 (PTIP…NNNS), 1725 to 1771 (VSNN…NNGN), 1802 to 1848 (NNLM…NNNH), and 1905 to 1929 (ENNT…TISQ). Low complexity-rich tracts occupy residues 1149–1181 (TSNS…INNN) and 1222–1239 (SHSN…SYTS). The span at 1324-1353 (TNGSMKSSLFQQQLQPTGSINSSPINNHQV) shows a compositional bias: polar residues. Low complexity-rich tracts occupy residues 1506–1520 (QQQQ…QFQP) and 1530–1546 (PSSN…QPQQ). Low complexity predominate over residues 1726 to 1769 (SNNNNINSNNNNNNNNNNNNNNNNNNNNNNNNNNNNNNNSNNNN). Positions 1905 to 1915 (ENNTTTTTTTT) are enriched in low complexity. Over residues 1916 to 1929 (SNRPFRSNNPTISQ) the composition is skewed to polar residues. In terms of domain architecture, Protein kinase spans 1949 to 2208 (IVFLNKLGEG…SCPEILDSLL (260 aa)). ATP contacts are provided by residues 1955–1963 (LGEGTSAKV) and Lys1976. Residue Asp2069 is the Proton acceptor of the active site.

The protein belongs to the protein kinase superfamily. TKL Ser/Thr protein kinase family.

The enzyme catalyses L-seryl-[protein] + ATP = O-phospho-L-seryl-[protein] + ADP + H(+). It carries out the reaction L-threonyl-[protein] + ATP = O-phospho-L-threonyl-[protein] + ADP + H(+). The polypeptide is Probable serine/threonine-protein kinase DDB_G0267686 (Dictyostelium discoideum (Social amoeba)).